A 556-amino-acid polypeptide reads, in one-letter code: Formate--tetrahydrofolate ligase (556 aa).

65 to 72 (TPAGEGKS) serves as a coordination point for ATP.

This sequence belongs to the formate--tetrahydrofolate ligase family.

The catalysed reaction is (6S)-5,6,7,8-tetrahydrofolate + formate + ATP = (6R)-10-formyltetrahydrofolate + ADP + phosphate. It functions in the pathway one-carbon metabolism; tetrahydrofolate interconversion. This is Formate--tetrahydrofolate ligase from Streptococcus thermophilus (strain CNRZ 1066).